The following is a 436-amino-acid chain: Trigger factor (436 aa).

The PPIase FKBP-type domain maps to 163–248 (GDRVVLDFAG…VKEVAEGVLP (86 aa)).

This sequence belongs to the FKBP-type PPIase family. Tig subfamily.

It is found in the cytoplasm. The catalysed reaction is [protein]-peptidylproline (omega=180) = [protein]-peptidylproline (omega=0). Functionally, involved in protein export. Acts as a chaperone by maintaining the newly synthesized protein in an open conformation. Functions as a peptidyl-prolyl cis-trans isomerase. The sequence is that of Trigger factor from Bordetella pertussis (strain Tohama I / ATCC BAA-589 / NCTC 13251).